The chain runs to 454 residues: tRNA modification GTPase MnmE (454 aa).

(6S)-5-formyl-5,6,7,8-tetrahydrofolate is bound by residues R23, E80, and K120. The TrmE-type G domain occupies 216 to 377; sequence GMKVVIAGRP…LRNHLKQSMG (162 aa). K(+) is bound at residue N226. Residues 226-231, 245-251, 270-273, 335-338, and 358-360 contribute to the GTP site; these read NAGKSS, TDIAGTT, DTAG, NKAD, and SAR. S230 serves as a coordination point for Mg(2+). K(+)-binding residues include T245, I247, and T250. T251 lines the Mg(2+) pocket. Residue K454 coordinates (6S)-5-formyl-5,6,7,8-tetrahydrofolate.

The protein belongs to the TRAFAC class TrmE-Era-EngA-EngB-Septin-like GTPase superfamily. TrmE GTPase family. Homodimer. Heterotetramer of two MnmE and two MnmG subunits. K(+) is required as a cofactor.

It localises to the cytoplasm. Its function is as follows. Exhibits a very high intrinsic GTPase hydrolysis rate. Involved in the addition of a carboxymethylaminomethyl (cmnm) group at the wobble position (U34) of certain tRNAs, forming tRNA-cmnm(5)s(2)U34. This is tRNA modification GTPase MnmE from Yersinia enterocolitica serotype O:8 / biotype 1B (strain NCTC 13174 / 8081).